Here is a 113-residue protein sequence, read N- to C-terminus: Protein FMC1 homolog (113 aa).

The disordered stretch occupies residues 94–113; the sequence is SAGLVGLQLPHQPGGKGWEP.

Belongs to the FMC1 family. In terms of assembly, interacts with ATPAF2.

The protein resides in the mitochondrion. Functionally, plays a role in the assembly/stability of the mitochondrial membrane ATP synthase (F(1)F(0) ATP synthase or Complex V). The sequence is that of Protein FMC1 homolog from Rattus norvegicus (Rat).